An 880-amino-acid chain; its full sequence is Paramyosin (880 aa).

Positions 1 to 34 (MSGSLYRSPSAALYKSPSMSAFGGLPAAFGSMSV) are nonhelical region. A coiled-coil region spans residues 35-859 (ADLGSLTRLE…LIRAKHRHQL (825 aa)). The tract at residues 860 to 880 (LRAKMLQRQKFTFSKMSNRDN) is nonhelical region.

The protein belongs to the paramyosin family. In terms of assembly, homodimer.

The protein localises to the cytoplasm. It is found in the myofibril. Its function is as follows. Paramyosin is a major structural component of many thick filaments isolated from invertebrate muscles. The sequence is that of Paramyosin from Brugia malayi (Filarial nematode worm).